The chain runs to 373 residues: Galactoside alpha-(1,2)-fucosyltransferase 1 (373 aa).

At 1-12 the chain is on the cytoplasmic side; that stretch reads MWPPSRRQLCLA. Residues 13–29 form a helical; Signal-anchor for type II membrane protein membrane-spanning segment; sequence FLLVCALSAFSFLLHLH. Residues 30-373 lie on the Lumenal side of the membrane; it reads QDLFRNGLAL…GSWRPWRFLG (344 aa). Asn-66, Asn-301, and Asn-327 each carry an N-linked (GlcNAc...) asparagine glycan.

Belongs to the glycosyltransferase 11 family. In terms of tissue distribution, brain.

It localises to the golgi apparatus. It is found in the golgi stack membrane. The enzyme catalyses a beta-D-galactosyl-(1-&gt;4)-N-acetyl-beta-D-glucosaminyl derivative + GDP-beta-L-fucose = an alpha-L-Fuc-(1-&gt;2)-beta-D-Gal-(1-&gt;4)-beta-D-GlcNAc derivative + GDP + H(+). It catalyses the reaction a ganglioside GA1 + GDP-beta-L-fucose = a ganglioside Fuc-GA1 + GDP + H(+). The catalysed reaction is a beta-D-Gal-(1-&gt;3)-beta-D-GlcNAc-(1-&gt;3)-beta-D-Gal-(1-&gt;4)-beta-D-Glc-(1&lt;-&gt;1')-Cer(d18:1(4E)) + GDP-beta-L-fucose = alpha-L-fucosyl-(1-&gt;2)- beta-D-galactosyl-(1-&gt;3)-N-acetyl-beta-D-glucosaminyl-(1-&gt;3)-beta-D-galactosyl-(1-&gt;4)-beta-D-glucosyl-(1&lt;-&gt;1')-N-acylsphing-4-enine + GDP + H(+). It carries out the reaction a neolactoside nLc4Cer(d18:1(4E)) + GDP-beta-L-fucose = a neolactoside IV(2)-alpha-Fuc-nLc4Cer(d18:1(4E)) + GDP + H(+). The enzyme catalyses a ganglioside GM1 + GDP-beta-L-fucose = a ganglioside Fuc-GM1 + GDP + H(+). It catalyses the reaction beta-D-galactosyl-(1-&gt;3)-N-acetyl-D-galactosamine + GDP-beta-L-fucose = alpha-L-fucosyl-(1-&gt;2)-beta-D-galactosyl-(1-&gt;3)-N-acetyl-D-galactosamine + GDP + H(+). It functions in the pathway protein modification; protein glycosylation. Functionally, catalyzes the transfer of L-fucose, from a guanosine diphosphate-beta-L-fucose, to the terminal galactose residue of glycoconjugates through an alpha(1,2) linkage leading to H antigen synthesis that is an intermediate substrate in the synthesis of ABO blood group antigens. H antigen is essential for maturation of the glomerular layer of the main olfactory bulb, in cell migration and early cell-cell contacts during tumor associated angiogenesis. Preferentially fucosylates soluble lactose and to a lesser extent fucosylates glycolipids gangliosides GA1 and GM1a. The protein is Galactoside alpha-(1,2)-fucosyltransferase 1 of Oryctolagus cuniculus (Rabbit).